A 382-amino-acid chain; its full sequence is Transforming growth factor beta-1 proprotein (382 aa).

Residues 1-20 (MRAVCLMLTALLMLEYVCRS) form the signal peptide. The interval 23 to 68 (MSTCKSLDLELVKRKRIEAIRGQILSKLRLPKEPEIDQEGDTEEVP) is straightjacket domain. The arm domain stretch occupies residues 69 to 264 (ASLMSIYNST…SLPVERHSQL (196 aa)). N-linked (GlcNAc...) asparagine glycosylation is found at asparagine 76, asparagine 116, and asparagine 125. The tract at residues 218–243 (GKPMEEFRFKISGMNKLRGNTETLAM) is bowtie tail. The Cell attachment site signature appears at 235 to 237 (RGN). 4 disulfide bridges follow: cysteine 278-cysteine 286, cysteine 285-cysteine 348, cysteine 314-cysteine 379, and cysteine 318-cysteine 381.

It belongs to the TGF-beta family. Latency-associated peptide: Homodimer; disulfide-linked. Latency-associated peptide: Interacts with Transforming growth factor beta-1 (TGF-beta-1) chain; interaction is non-covalent and maintains (TGF-beta-1) in a latent state; each Latency-associated peptide (LAP) monomer interacts with TGF-beta-1 in the other monomer. Transforming growth factor beta-1: Homodimer; disulfide-linked. Transforming growth factor beta-1: Interacts with TGF-beta receptors (tgfbr1 and tgfbr2), leading to signal transduction. Interacts with EFEMP2. Transforming growth factor beta-1 proprotein: The precursor proprotein is cleaved in the Golgi apparatus to form Transforming growth factor beta-1 (TGF-beta-1) and Latency-associated peptide (LAP) chains, which remain non-covalently linked, rendering TGF-beta-1 inactive. In terms of tissue distribution, expressed in blood leukocytes, kidney macrophages, brain, gill and spleen but not in liver.

It localises to the secreted. Its subcellular location is the extracellular space. It is found in the extracellular matrix. Transforming growth factor beta-1 proprotein: Precursor of the Latency-associated peptide (LAP) and Transforming growth factor beta-1 (TGF-beta-1) chains, which constitute the regulatory and active subunit of TGF-beta-1, respectively. Functionally, required to maintain the Transforming growth factor beta-1 (TGF-beta-1) chain in a latent state during storage in extracellular matrix. Associates non-covalently with TGF-beta-1 and regulates its activation via interaction with 'milieu molecules', such as LTBP1, LRRC32/GARP and LRRC33/NRROS, that control activation of TGF-beta-1. Interaction with integrins (ITGAV:ITGB6 or ITGAV:ITGB8) results in distortion of the Latency-associated peptide chain and subsequent release of the active TGF-beta-1. Its function is as follows. Transforming growth factor beta-1: Multifunctional protein that regulates the growth and differentiation of various cell types and is involved in various processes, such as normal development, immune function, microglia function and responses to neurodegeneration. Activation into mature form follows different steps: following cleavage of the proprotein in the Golgi apparatus, Latency-associated peptide (LAP) and Transforming growth factor beta-1 (TGF-beta-1) chains remain non-covalently linked rendering TGF-beta-1 inactive during storage in extracellular matrix. At the same time, LAP chain interacts with 'milieu molecules', such as ltbp1, lrrc32/garp and lrrc33/nrros that control activation of TGF-beta-1 and maintain it in a latent state during storage in extracellular milieus. TGF-beta-1 is released from LAP by integrins (ITGAV:ITGB6 or ITGAV:ITGB8): integrin-binding to LAP stabilizes an alternative conformation of the LAP bowtie tail and results in distortion of the LAP chain and subsequent release of the active TGF-beta-1. Once activated following release of LAP, TGF-beta-1 acts by binding to TGF-beta receptors (tgfbr1 and tgfbr2), which transduce signal. While expressed by many cells types, TGF-beta-1 only has a very localized range of action within cell environment thanks to fine regulation of its activation by Latency-associated peptide chain (LAP) and 'milieu molecules'. Plays an important role in bone remodeling: acts as a potent stimulator of osteoblastic bone formation. Can promote either T-helper 17 cells (Th17) or regulatory T-cells (Treg) lineage differentiation in a concentration-dependent manner. Can induce epithelial-to-mesenchymal transition (EMT) and cell migration in various cell types. The protein is Transforming growth factor beta-1 proprotein (tgfb1) of Oncorhynchus mykiss (Rainbow trout).